The following is a 241-amino-acid chain: Thiamine import ATP-binding protein ThiQ (241 aa).

One can recognise an ABC transporter domain in the interval 7 to 235; sequence IRLSDVRFSY…AGPEALRHYI (229 aa). 37 to 44 serves as a coordination point for ATP; that stretch reads GPSGSGKS.

Belongs to the ABC transporter superfamily. Thiamine importer (TC 3.A.1.19.1) family. In terms of assembly, the complex is composed of two ATP-binding proteins (ThiQ), two transmembrane proteins (ThiP) and a solute-binding protein (ThiB).

Its subcellular location is the cell inner membrane. The catalysed reaction is thiamine(out) + ATP + H2O = thiamine(in) + ADP + phosphate + H(+). In terms of biological role, part of the ABC transporter complex ThiBPQ involved in thiamine import. Responsible for energy coupling to the transport system. This chain is Thiamine import ATP-binding protein ThiQ, found in Brucella abortus biovar 1 (strain 9-941).